A 548-amino-acid polypeptide reads, in one-letter code: Asparagine--tRNA ligase, cytoplasmic (548 aa).

Positions 1-25 (MVLAELYVSDREGSDATGDGTKEKP) are disordered. Over residues 8-25 (VSDREGSDATGDGTKEKP) the composition is skewed to basic and acidic residues. A Phosphoserine modification is found at Ser61. Residues 69–91 (MWHREQMKSESREKKEAEDSLRR) form a disordered region. A compositionally biased stretch (basic and acidic residues) spans 71–91 (HREQMKSESREKKEAEDSLRR). Lys244 carries the N6-acetyllysine modification. Ser482 carries the phosphoserine modification. The residue at position 490 (Lys490) is an N6-acetyllysine.

It belongs to the class-II aminoacyl-tRNA synthetase family. In terms of assembly, homodimer.

The protein localises to the cytoplasm. It catalyses the reaction tRNA(Asn) + L-asparagine + ATP = L-asparaginyl-tRNA(Asn) + AMP + diphosphate + H(+). Functionally, catalyzes the attachment of asparagine to tRNA(Asn) in a two-step reaction: asparagine is first activated by ATP to form Asn-AMP and then transferred to the acceptor end of tRNA(Asn). In addition to its essential role in protein synthesis, acts as a signaling molecule that induced migration of CCR3-expressing cells. Has an essential role in the development of the cerebral cortex, being required for proper proliferation of radial glial cells. In Homo sapiens (Human), this protein is Asparagine--tRNA ligase, cytoplasmic.